A 133-amino-acid chain; its full sequence is Fatty acid-binding protein, heart (133 aa).

The residue at position 2 (V2) is an N-acetylvaline. Position 8 is a phosphothreonine (T8). A Phosphotyrosine; by Tyr-kinases modification is found at Y20. Phosphoserine is present on S23. Residue T30 is modified to Phosphothreonine. Phosphoserine is present on S83. 127 to 129 (RTY) provides a ligand contact to (9Z)-octadecenoate. A hexadecanoate-binding site is contributed by 127–129 (RTY). 127 to 129 (RTY) provides a ligand contact to octadecanoate.

It belongs to the calycin superfamily. Fatty-acid binding protein (FABP) family.

The protein resides in the cytoplasm. Functionally, FABPs are thought to play a role in the intracellular transport of long-chain fatty acids and their acyl-CoA esters. The chain is Fatty acid-binding protein, heart (FABP3) from Sus scrofa (Pig).